The following is a 344-amino-acid chain: Phosphate acyltransferase (344 aa).

Belongs to the PlsX family. Homodimer. Probably interacts with PlsY.

It localises to the cytoplasm. The enzyme catalyses a fatty acyl-[ACP] + phosphate = an acyl phosphate + holo-[ACP]. The protein operates within lipid metabolism; phospholipid metabolism. Functionally, catalyzes the reversible formation of acyl-phosphate (acyl-PO(4)) from acyl-[acyl-carrier-protein] (acyl-ACP). This enzyme utilizes acyl-ACP as fatty acyl donor, but not acyl-CoA. The chain is Phosphate acyltransferase from Yersinia pestis bv. Antiqua (strain Antiqua).